The chain runs to 809 residues: Interleukin-4 receptor subunit alpha (809 aa).

The N-terminal stretch at 1–25 (MGCLCPGLTLPVSCLILVWAAGSGS) is a signal peptide. The Extracellular segment spans residues 26–231 (VKVLRLTACF…NYYEQPLEQR (206 aa)). Cys-34 and Cys-44 form a disulfide bridge. N-linked (GlcNAc...) asparagine glycans are attached at residues Asn-53 and Asn-71. A disulfide bridge links Cys-74 with Cys-86. 3 N-linked (GlcNAc...) asparagine glycosylation sites follow: Asn-112, Asn-128, and Asn-161. The Fibronectin type-III domain occupies 125-222 (APQNLTVHAI…EWSPSTTWHN (98 aa)). Phosphoserine is present on Ser-163. Residues Asn-175 and Asn-208 are each glycosylated (N-linked (GlcNAc...) asparagine). The WSXWS motif signature appears at 211 to 215 (WSEWS). The helical transmembrane segment at 232–255 (LPLGVSISCVVILAICLSCYFSII) threads the bilayer. Residues 256 to 809 (KIKKEWWDQI…STGPTCTSAS (554 aa)) are Cytoplasmic-facing. Positions 261-269 (WWDQIPNPA) match the Box 1 motif motif. Disordered regions lie at residues 369–397 (ESEE…QEGR) and 441–468 (SAGP…TLTQ). The span at 447-468 (AASQGEEQPLNPESNPLATLTQ) shows a compositional bias: polar residues. Residue Tyr-488 is modified to Phosphotyrosine. The segment at 514 to 536 (LGQVDPSIPSAPQPSEPPTALQP) is disordered. Residues Tyr-566, Tyr-590, and Tyr-618 each carry the phosphotyrosine modification. Residues 606–674 (QSGVEASSGE…EPTVKGEDPR (69 aa)) are disordered. Positions 695-700 (IVYSAL) match the ITIM motif motif.

It belongs to the type I cytokine receptor family. Type 4 subfamily. As to quaternary structure, the functional IL4 receptor is formed by initial binding of IL4 to IL4R. Subsequent recruitment to the complex of the common gamma chain, in immune cells, creates a type I receptor and, in non-immune cells, of IL13RA1 forms a type II receptor. IL4R can also interact with the IL13/IL13RA1 complex to form a similar type II receptor. Interacts with PIK3C3. Interacts with the SH2-containing phosphatases, PTPN6/SHIP1, PTPN11/SHIP2 and INPP5D/SHIP. Interacts with JAK1 through a Box 1-containing region; inhibited by SOCS5. Interacts with SOCS5; inhibits IL4 signaling. Interacts with JAK3. Interacts with CLM1. Interacts with IL13RA2. Post-translationally, on IL4 binding, phosphorylated on tyrosine residues in the cytoplasmic domain.

The protein localises to the cell membrane. The protein resides in the secreted. Receptor for both interleukin 4 and interleukin 13. Couples to the JAK1/2/3-STAT6 pathway. The IL4 response is involved in promoting Th2 differentiation. The IL4/IL13 responses are involved in regulating IgE production and, chemokine and mucus production at sites of allergic inflammation. In certain cell types, can signal through activation of insulin receptor substrates, IRS1/IRS2. The chain is Interleukin-4 receptor subunit alpha (IL4R) from Equus caballus (Horse).